The primary structure comprises 495 residues: Lysine--tRNA ligase (495 aa).

The Mg(2+) site is built by Glu406 and Glu413.

This sequence belongs to the class-II aminoacyl-tRNA synthetase family. In terms of assembly, homodimer. Mg(2+) serves as cofactor.

It is found in the cytoplasm. The enzyme catalyses tRNA(Lys) + L-lysine + ATP = L-lysyl-tRNA(Lys) + AMP + diphosphate. This is Lysine--tRNA ligase from Staphylococcus aureus (strain MRSA252).